The sequence spans 421 residues: Battenin (421 aa).

Transmembrane regions (helical) follow at residues 13–35 (SFHFMGNINNFSYCVVNAASGNL), 47–67 (IILWANIAFGLVSRLVNTFLI), 74–96 (LKIVVNCLFMSIGLIGVALSVYV), 101–123 (CIAAIAFVGIASSFGESVILSYM), and 137–157 (GTGIAGVCGSLFYIAMVAAGL). Asparagine 159 carries an N-linked (GlcNAc...) asparagine glycan. Residues 161-181 (TIFYMMLPTVAVYFLLFFFGL) form a helical membrane-spanning segment. The segment at 190-211 (DRTDNHNNSNNSSNNSKYTEKQ) is disordered. The span at 195 to 205 (HNNSNNSSNNS) shows a compositional bias: low complexity. Residues asparagine 196, asparagine 199, asparagine 200, and asparagine 203 are each glycosylated (N-linked (GlcNAc...) asparagine). A run of 5 helical transmembrane segments spans residues 248-268 (LVWFNAVNLALVYFFEYVASV), 284-304 (FFIANAFAIFSFCYQLGVLIS), 313-333 (IKHIGVITILQGINMVFWIIQ), 338-358 (MVTSVWVLFILMVYCGLLGGA), and 382-402 (INYAALLVTVGITLAACFILV).

It belongs to the battenin family.

The protein localises to the lysosome membrane. The polypeptide is Battenin (cln3) (Dictyostelium discoideum (Social amoeba)).